Consider the following 404-residue polypeptide: Cysteine desulfurase IscS (404 aa).

Pyridoxal 5'-phosphate contacts are provided by residues 75 to 76, N155, Q183, and 203 to 205; these read AT and SAH. An N6-(pyridoxal phosphate)lysine modification is found at K206. Position 243 (T243) interacts with pyridoxal 5'-phosphate. C328 (cysteine persulfide intermediate) is an active-site residue. Residue C328 participates in [2Fe-2S] cluster binding.

It belongs to the class-V pyridoxal-phosphate-dependent aminotransferase family. NifS/IscS subfamily. As to quaternary structure, homodimer. Forms a heterotetramer with IscU, interacts with other sulfur acceptors. Pyridoxal 5'-phosphate is required as a cofactor.

The protein resides in the cytoplasm. It catalyses the reaction (sulfur carrier)-H + L-cysteine = (sulfur carrier)-SH + L-alanine. It functions in the pathway cofactor biosynthesis; iron-sulfur cluster biosynthesis. In terms of biological role, master enzyme that delivers sulfur to a number of partners involved in Fe-S cluster assembly, tRNA modification or cofactor biosynthesis. Catalyzes the removal of elemental sulfur atoms from cysteine to produce alanine. Functions as a sulfur delivery protein for Fe-S cluster synthesis onto IscU, an Fe-S scaffold assembly protein, as well as other S acceptor proteins. The protein is Cysteine desulfurase IscS of Stutzerimonas stutzeri (strain A1501) (Pseudomonas stutzeri).